A 215-amino-acid polypeptide reads, in one-letter code: Redox-sensing transcriptional repressor Rex (215 aa).

Residues 18–57 (LYYRFLKNLHASGKQRVSSAELSEAVKVDPATIRRDFSYF) constitute a DNA-binding region (H-T-H motif). 92-97 (GVGNLG) is an NAD(+) binding site.

It belongs to the transcriptional regulatory Rex family. In terms of assembly, homodimer.

The protein localises to the cytoplasm. In terms of biological role, modulates transcription in response to changes in cellular NADH/NAD(+) redox state. This chain is Redox-sensing transcriptional repressor Rex, found in Geobacillus sp. (strain WCH70).